Reading from the N-terminus, the 559-residue chain is Dihydroxy-acid dehydratase (559 aa).

Cysteine 52 lines the [2Fe-2S] cluster pocket. Residue aspartate 84 participates in Mg(2+) binding. Cysteine 125 provides a ligand contact to [2Fe-2S] cluster. The Mg(2+) site is built by aspartate 126 and lysine 127. Lysine 127 carries the post-translational modification N6-carboxylysine. [2Fe-2S] cluster is bound at residue cysteine 197. Glutamate 447 contacts Mg(2+). Serine 473 acts as the Proton acceptor in catalysis.

The protein belongs to the IlvD/Edd family. Homodimer. It depends on [2Fe-2S] cluster as a cofactor. Requires Mg(2+) as cofactor.

The catalysed reaction is (2R)-2,3-dihydroxy-3-methylbutanoate = 3-methyl-2-oxobutanoate + H2O. The enzyme catalyses (2R,3R)-2,3-dihydroxy-3-methylpentanoate = (S)-3-methyl-2-oxopentanoate + H2O. Its pathway is amino-acid biosynthesis; L-isoleucine biosynthesis; L-isoleucine from 2-oxobutanoate: step 3/4. The protein operates within amino-acid biosynthesis; L-valine biosynthesis; L-valine from pyruvate: step 3/4. Functions in the biosynthesis of branched-chain amino acids. Catalyzes the dehydration of (2R,3R)-2,3-dihydroxy-3-methylpentanoate (2,3-dihydroxy-3-methylvalerate) into 2-oxo-3-methylpentanoate (2-oxo-3-methylvalerate) and of (2R)-2,3-dihydroxy-3-methylbutanoate (2,3-dihydroxyisovalerate) into 2-oxo-3-methylbutanoate (2-oxoisovalerate), the penultimate precursor to L-isoleucine and L-valine, respectively. The polypeptide is Dihydroxy-acid dehydratase (Roseiflexus sp. (strain RS-1)).